A 209-amino-acid polypeptide reads, in one-letter code: MNGWNFQELKETPSQTGGPYVHIGLLPKQANIEVFEHNLDNNLVQDNTQGQRIRLEGQVFDGLGLPLRDVLIEIWQADTNGVYPSQADTQGKQVDPNFLGWGRTGADFGTGFWSFNTIKPGAVPGRKGSTQAPHISLIIFARGINIGLHTRVYFDDEAEANAKDPVLNSIEWATRRQTLVAKREERDGEVVYRFDIRIQGENETVFFDI.

R142 lines the 3,4-dihydroxybenzoate pocket.

Belongs to the intradiol ring-cleavage dioxygenase family. In terms of assembly, the enzyme is an oligomer of 12 copies of the alpha and beta chains. Fe(3+) is required as a cofactor.

It catalyses the reaction 3,4-dihydroxybenzoate + O2 = 3-carboxy-cis,cis-muconate + 2 H(+). It participates in aromatic compound metabolism; beta-ketoadipate pathway; 3-carboxy-cis,cis-muconate from 3,4-dihydroxybenzoate: step 1/1. Its function is as follows. Plays an essential role in the utilization of numerous aromatic and hydroaromatic compounds via the beta-ketoadipate pathway. This chain is Protocatechuate 3,4-dioxygenase alpha chain (pcaG), found in Acinetobacter baylyi (strain ATCC 33305 / BD413 / ADP1).